Here is a 398-residue protein sequence, read N- to C-terminus: Bombesin receptor subtype-3 (398 aa).

The Extracellular segment spans residues 1–40; it reads MAQRQPHSPNQTLISITNDTESSSVVSNDNTNKGRSGDNS. Residues N10 and N18 are each glycosylated (N-linked (GlcNAc...) asparagine). A helical membrane pass occupies residues 41-62; sequence PGIEALCAIYITYAVIISVGIL. Over 63-81 the chain is Cytoplasmic; sequence GNAILIKVFFKTKSMQTVP. Residues 82–102 traverse the membrane as a helical segment; that stretch reads NIFITSLAFGDLLLLLTCVPV. Residues 103-120 lie on the Extracellular side of the membrane; it reads DATHYLAEGWLFGRIGCK. A disulfide bridge links C119 with C202. Residues 121–142 traverse the membrane as a helical segment; the sequence is VLSFIRLTSVGVSVFTLTILSA. At 143–162 the chain is on the cytoplasmic side; sequence DRYKAVVKPLERQPSNAILK. A helical transmembrane segment spans residues 163–183; it reads TCIKAGCVWIVSMIFALPEAI. Residues 184 to 219 lie on the Extracellular side of the membrane; that stretch reads FSNVYSFRDPNKNVTFESCTSYPVSKKLLQEIHSLL. Residues 220-240 form a helical membrane-spanning segment; sequence CFLVFYIIPLSIISVYYSLIA. The Cytoplasmic segment spans residues 241 to 271; sequence RTLYKSTLNIPTEEQGHARKQIESRKRIART. Residues 272–292 form a helical membrane-spanning segment; sequence VLVLVALFALCWLPNHLLYLY. Topologically, residues 293-312 are extracellular; that stretch reads HSFTSQTYVDPSAMHFIFTI. A helical membrane pass occupies residues 313-332; sequence FSRVLAFSNSCVNPFALYWL. Residues 333–398 lie on the Cytoplasmic side of the membrane; that stretch reads SKTFQKHFKA…CSVKQAEDRV (66 aa). C346 is lipidated: S-palmitoyl cysteine.

It belongs to the G-protein coupled receptor 1 family. Interacts with C6orf89.

It is found in the cell membrane. Role in sperm cell division, maturation, or function. This receptor mediates its action by association with G proteins that activate a phosphatidylinositol-calcium second messenger system. The protein is Bombesin receptor subtype-3 (BRS3) of Macaca mulatta (Rhesus macaque).